Consider the following 383-residue polypeptide: TOM1-like protein 2 (383 aa).

Residues 45–178 (ATLETLEEPN…GLHARGEENS (134 aa)) enclose the VHS domain. Positions 223–310 (LSIKDKKEQI…VLSSYKKPDE (88 aa)) constitute a GAT domain. The disordered stretch occupies residues 305–383 (YKKPDETEKK…LGLSSDEDEK (79 aa)). Basic and acidic residues-rich tracts occupy residues 306–316 (KKPDETEKKAS) and 339–354 (EPVK…KHSE). Ser-377 and Ser-378 each carry phosphoserine.

The protein belongs to the TOM1 family. In terms of tissue distribution, ubiquitously expressed.

The protein resides in the cytoplasm. It is found in the membrane. Functionally, binds ubiquitin in vitro. Might contribute to the loading of the ESCRT machinery. This is TOM1-like protein 2 from Arabidopsis thaliana (Mouse-ear cress).